We begin with the raw amino-acid sequence, 372 residues long: Queuine tRNA-ribosyltransferase (372 aa).

The active-site Proton acceptor is aspartate 89. Substrate-binding positions include 89 to 93, aspartate 161, and glycine 232; that span reads DSGGF. Residues 262-268 are RNA binding; that stretch reads GIGDLPS. The active-site Nucleophile is aspartate 281. Residues 286-290 are RNA binding; important for wobble base 34 recognition; the sequence is TKAAR. The Zn(2+) site is built by cysteine 319, cysteine 321, cysteine 324, and histidine 351.

Belongs to the queuine tRNA-ribosyltransferase family. As to quaternary structure, homodimer. Within each dimer, one monomer is responsible for RNA recognition and catalysis, while the other monomer binds to the replacement base PreQ1. Zn(2+) is required as a cofactor.

The enzyme catalyses 7-aminomethyl-7-carbaguanine + guanosine(34) in tRNA = 7-aminomethyl-7-carbaguanosine(34) in tRNA + guanine. It functions in the pathway tRNA modification; tRNA-queuosine biosynthesis. Its function is as follows. Catalyzes the base-exchange of a guanine (G) residue with the queuine precursor 7-aminomethyl-7-deazaguanine (PreQ1) at position 34 (anticodon wobble position) in tRNAs with GU(N) anticodons (tRNA-Asp, -Asn, -His and -Tyr). Catalysis occurs through a double-displacement mechanism. The nucleophile active site attacks the C1' of nucleotide 34 to detach the guanine base from the RNA, forming a covalent enzyme-RNA intermediate. The proton acceptor active site deprotonates the incoming PreQ1, allowing a nucleophilic attack on the C1' of the ribose to form the product. After dissociation, two additional enzymatic reactions on the tRNA convert PreQ1 to queuine (Q), resulting in the hypermodified nucleoside queuosine (7-(((4,5-cis-dihydroxy-2-cyclopenten-1-yl)amino)methyl)-7-deazaguanosine). This chain is Queuine tRNA-ribosyltransferase, found in Chlamydia abortus (strain DSM 27085 / S26/3) (Chlamydophila abortus).